Reading from the N-terminus, the 219-residue chain is Small ribosomal subunit protein eS1 (219 aa).

The protein belongs to the eukaryotic ribosomal protein eS1 family. Component of the small ribosomal subunit. Mature ribosomes consist of a small (40S) and a large (60S) subunit. The 40S subunit contains about 33 different proteins and 1 molecule of RNA (18S). The 60S subunit contains about 49 different proteins and 3 molecules of RNA (25S, 5.8S and 5S).

It localises to the cytoplasm. The polypeptide is Small ribosomal subunit protein eS1 (Guillardia theta (Cryptophyte)).